The chain runs to 92 residues: PqqA binding protein (92 aa).

The protein belongs to the PqqD family. As to quaternary structure, monomer. Interacts with PqqE.

Its pathway is cofactor biosynthesis; pyrroloquinoline quinone biosynthesis. Functionally, functions as a PqqA binding protein and presents PqqA to PqqE, in the pyrroloquinoline quinone (PQQ) biosynthetic pathway. This chain is PqqA binding protein, found in Pseudomonas aeruginosa (strain UCBPP-PA14).